A 195-amino-acid polypeptide reads, in one-letter code: Phosphoheptose isomerase (195 aa).

Residues 37–195 (ISDSFKQHGK…IEFEMAKIRQ (159 aa)) enclose the SIS domain. Substrate is bound at residue 52-54 (NGG). Zn(2+)-binding residues include H61 and E65. Substrate is bound by residues E65, 93–94 (ND), 119–121 (STS), S124, and Q172. Q172 and H180 together coordinate Zn(2+).

Belongs to the SIS family. GmhA subfamily. As to quaternary structure, homotetramer. The cofactor is Zn(2+).

It is found in the cytoplasm. It carries out the reaction 2 D-sedoheptulose 7-phosphate = D-glycero-alpha-D-manno-heptose 7-phosphate + D-glycero-beta-D-manno-heptose 7-phosphate. Its pathway is carbohydrate biosynthesis; D-glycero-D-manno-heptose 7-phosphate biosynthesis; D-glycero-alpha-D-manno-heptose 7-phosphate and D-glycero-beta-D-manno-heptose 7-phosphate from sedoheptulose 7-phosphate: step 1/1. Catalyzes the isomerization of sedoheptulose 7-phosphate in D-glycero-D-manno-heptose 7-phosphate. The polypeptide is Phosphoheptose isomerase (Histophilus somni (strain 2336) (Haemophilus somnus)).